We begin with the raw amino-acid sequence, 268 residues long: Calpain small subunit 1 (268 aa).

Met1 is modified (N-acetylmethionine). Position 6 is a phosphoserine (Ser6). An EF-hand 1; atypical domain is found at 91 to 125 (EANESEEVRQFRRLFAQLAGDDMEVSATELMNILN). Ca(2+) contacts are provided by Ala109, Asp112, Glu114, Glu119, Asp137, Asp152, Asp154, Thr156, Lys158, and Glu163. 4 consecutive EF-hand domains span residues 139 to 172 (FGID…NNIK), 169 to 204 (NNIK…AGFH), 205 to 233 (LNEH…ISCL), and 234 to 268 (VRLD…TMYS). Residue Lys179 is modified to N6-acetyllysine. Ca(2+) contacts are provided by Asp182, Asp184, Ser186, Thr188, Glu193, and Asp225.

In terms of assembly, homodimer or heterodimer of a large (catalytic) and a small (regulatory) subunit. In presence of calcium, the heterodimer dissociates.

The protein localises to the cytoplasm. It localises to the cell membrane. In terms of biological role, regulatory subunit of the calcium-regulated non-lysosomal thiol-protease which catalyzes limited proteolysis of substrates involved in cytoskeletal remodeling and signal transduction. Essential for embryonic development. The protein is Calpain small subunit 1 (CAPNS1) of Homo sapiens (Human).